The chain runs to 305 residues: Glycine--tRNA ligase alpha subunit (305 aa).

It belongs to the class-II aminoacyl-tRNA synthetase family. Tetramer of two alpha and two beta subunits.

It is found in the cytoplasm. The catalysed reaction is tRNA(Gly) + glycine + ATP = glycyl-tRNA(Gly) + AMP + diphosphate. This chain is Glycine--tRNA ligase alpha subunit, found in Streptococcus pneumoniae (strain CGSP14).